Here is a 247-residue protein sequence, read N- to C-terminus: 7-carboxy-7-deazaguanine synthase (247 aa).

Residues 15 to 17 and Arg-30 each bind substrate; that span reads IQG. A Radical SAM core domain is found at 21 to 247; it reads LVGRRQIFVR…PQMHRALGLR (227 aa). [4Fe-4S] cluster-binding residues include Cys-34, Cys-38, and Cys-41. Thr-43 contributes to the Mg(2+) binding site. A substrate-binding site is contributed by Thr-78. An S-adenosyl-L-methionine-binding site is contributed by Gly-80.

It belongs to the radical SAM superfamily. 7-carboxy-7-deazaguanine synthase family. Homodimer. Requires [4Fe-4S] cluster as cofactor. It depends on S-adenosyl-L-methionine as a cofactor. The cofactor is Mg(2+).

It carries out the reaction 6-carboxy-5,6,7,8-tetrahydropterin + H(+) = 7-carboxy-7-deazaguanine + NH4(+). Its pathway is purine metabolism; 7-cyano-7-deazaguanine biosynthesis. Its function is as follows. Catalyzes the complex heterocyclic radical-mediated conversion of 6-carboxy-5,6,7,8-tetrahydropterin (CPH4) to 7-carboxy-7-deazaguanine (CDG), a step common to the biosynthetic pathways of all 7-deazapurine-containing compounds. The chain is 7-carboxy-7-deazaguanine synthase from Methanothermobacter thermautotrophicus (strain ATCC 29096 / DSM 1053 / JCM 10044 / NBRC 100330 / Delta H) (Methanobacterium thermoautotrophicum).